We begin with the raw amino-acid sequence, 348 residues long: D-alanine--D-alanine ligase (348 aa).

The ATP-grasp domain occupies 132-334 (KRVLESIGIP…YPDLIEVLVT (203 aa)). Position 162-217 (162-217 (LARLTFPIFVKPANMGSSVGISKAQTKVELRKAIQLALTYDSRVLIEQGVVAREIE)) interacts with ATP. Mg(2+)-binding residues include Asp-288, Glu-301, and Asn-303.

It belongs to the D-alanine--D-alanine ligase family. Requires Mg(2+) as cofactor. The cofactor is Mn(2+).

It is found in the cytoplasm. It catalyses the reaction 2 D-alanine + ATP = D-alanyl-D-alanine + ADP + phosphate + H(+). It functions in the pathway cell wall biogenesis; peptidoglycan biosynthesis. Cell wall formation. The chain is D-alanine--D-alanine ligase from Streptococcus pyogenes serotype M2 (strain MGAS10270).